Consider the following 134-residue polypeptide: ATP synthase epsilon chain (134 aa).

Belongs to the ATPase epsilon chain family. In terms of assembly, F-type ATPases have 2 components, CF(1) - the catalytic core - and CF(0) - the membrane proton channel. CF(1) has five subunits: alpha(3), beta(3), gamma(1), delta(1), epsilon(1). CF(0) has three main subunits: a, b and c.

The protein localises to the cell membrane. Produces ATP from ADP in the presence of a proton gradient across the membrane. The polypeptide is ATP synthase epsilon chain (Listeria monocytogenes serotype 4b (strain F2365)).